The sequence spans 66 residues: UPF0370 protein YpfN (66 aa).

The helical transmembrane segment at 4 to 24 threads the bilayer; sequence LAKYWWILVLVFLVGVLLNVI. Residues 39-66 form a disordered region; that stretch reads KPELPPHRDFNDKWDDEDDWPKKDQPKK. Over residues 42-51 the composition is skewed to basic and acidic residues; sequence LPPHRDFNDK.

The protein belongs to the UPF0370 family.

The protein resides in the cell membrane. The sequence is that of UPF0370 protein YpfN from Salmonella paratyphi C (strain RKS4594).